Reading from the N-terminus, the 447-residue chain is Nacrein (447 aa).

An N-terminal signal peptide occupies residues 1–17 (MYLHLTALCVVIPLCYG). N44 carries an N-linked (GlcNAc...) asparagine glycan. An Alpha-carbonic anhydrase domain is found at 50–446 (AGFSYDRSIC…KNKVTVYKSF (397 aa)). 3 residues coordinate Zn(2+): H149, H151, and H174. The segment at 218-329 (DEPDDEECKH…GENGHKHGCR (112 aa)) is disordered. The segment covering 224–236 (ECKHILKGHHPDN) has biased composition (basic and acidic residues). The span at 237–321 (NENGNGDNGN…NNGENGNNGE (85 aa)) shows a compositional bias: low complexity. 27 tandem repeats follow at residues 242 to 244 (GDN), 245 to 247 (GNN), 248 to 250 (GYN), 251 to 253 (GDN), 254 to 256 (GNN), 257 to 259 (GDN), 260 to 262 (GNN), 263 to 265 (SYN), 266 to 268 (GDN), 269 to 271 (GNN), 272 to 274 (GVN), 275 to 277 (GNN), 278 to 280 (GYN), 281 to 283 (GDN), 284 to 286 (GNN), 287 to 289 (GDN), 290 to 292 (GNN), 293 to 295 (GYN), 296 to 298 (GDN), 299 to 301 (GNN), 302 to 304 (GDN), 305 to 307 (GNN), 308 to 310 (GEN), 311 to 313 (GNN), 314 to 316 (GEN), 317 to 318 (GN), and 320 to 322 (GEN). The segment at 242–322 (GDNGNNGYNG…NGENGNNGEN (81 aa)) is 27 X 3 AA approximate tandem repeats of G-X-N. N261 carries N-linked (GlcNAc...) asparagine glycosylation. 387 to 388 (TT) lines the substrate pocket.

Belongs to the alpha-carbonic anhydrase family. As to quaternary structure, homooligomer; disulfide-linked. May also be disulfide-linked to insoluble organic matrix. It depends on Zn(2+) as a cofactor. Post-translationally, N-glycosylated. In terms of tissue distribution, expressed at whole regions of the mantle epithelium tissue. Is found in the aragonitic nacreous and calcitic prismatic and foliated layers.

The protein localises to the secreted. The protein resides in the extracellular space. Its subcellular location is the extracellular matrix. The catalysed reaction is hydrogencarbonate + H(+) = CO2 + H2O. Its function is as follows. Acts as a negative regulator for calcification in the shells of mollusks. May function both as a calcium concentrator and as a carbonic anhydrase required for production of carbonate ions, which are assembled to CaCO(3) at mineralization sites. Is important for shell formation in both the calcitic prismatic layer and the aragonitic nacreous layer. The polypeptide is Nacrein (Pinctada fucata (Akoya pearl oyster)).